We begin with the raw amino-acid sequence, 942 residues long: Isoleucine--tRNA ligase (942 aa).

A 'HIGH' region motif is present at residues 58–68 (PYANGDIHIGH). An L-isoleucyl-5'-AMP-binding site is contributed by Glu566. Residues 607-611 (KMSKS) carry the 'KMSKS' region motif. Lys610 contributes to the ATP binding site. Residues Cys905, Cys908, Cys925, and Cys928 each contribute to the Zn(2+) site.

It belongs to the class-I aminoacyl-tRNA synthetase family. IleS type 1 subfamily. In terms of assembly, monomer. Zn(2+) serves as cofactor.

The protein resides in the cytoplasm. The catalysed reaction is tRNA(Ile) + L-isoleucine + ATP = L-isoleucyl-tRNA(Ile) + AMP + diphosphate. In terms of biological role, catalyzes the attachment of isoleucine to tRNA(Ile). As IleRS can inadvertently accommodate and process structurally similar amino acids such as valine, to avoid such errors it has two additional distinct tRNA(Ile)-dependent editing activities. One activity is designated as 'pretransfer' editing and involves the hydrolysis of activated Val-AMP. The other activity is designated 'posttransfer' editing and involves deacylation of mischarged Val-tRNA(Ile). This is Isoleucine--tRNA ligase from Vibrio campbellii (strain ATCC BAA-1116).